A 273-amino-acid polypeptide reads, in one-letter code: Bis(5'-nucleosyl)-tetraphosphatase, symmetrical (273 aa).

This sequence belongs to the Ap4A hydrolase family.

The catalysed reaction is P(1),P(4)-bis(5'-adenosyl) tetraphosphate + H2O = 2 ADP + 2 H(+). Its function is as follows. Hydrolyzes diadenosine 5',5'''-P1,P4-tetraphosphate to yield ADP. The protein is Bis(5'-nucleosyl)-tetraphosphatase, symmetrical of Aliivibrio salmonicida (strain LFI1238) (Vibrio salmonicida (strain LFI1238)).